The primary structure comprises 315 residues: Homoserine kinase (315 aa).

Residue 97–107 (PPARGLGSSAT) coordinates ATP.

Belongs to the GHMP kinase family. Homoserine kinase subfamily.

The protein localises to the cytoplasm. The catalysed reaction is L-homoserine + ATP = O-phospho-L-homoserine + ADP + H(+). It functions in the pathway amino-acid biosynthesis; L-threonine biosynthesis; L-threonine from L-aspartate: step 4/5. Catalyzes the ATP-dependent phosphorylation of L-homoserine to L-homoserine phosphate. The chain is Homoserine kinase from Prochlorococcus marinus (strain MIT 9301).